We begin with the raw amino-acid sequence, 462 residues long: 3-isopropylmalate dehydratase large subunit (462 aa).

[4Fe-4S] cluster-binding residues include C337, C397, and C400.

This sequence belongs to the aconitase/IPM isomerase family. LeuC type 1 subfamily. Heterodimer of LeuC and LeuD. [4Fe-4S] cluster serves as cofactor.

The enzyme catalyses (2R,3S)-3-isopropylmalate = (2S)-2-isopropylmalate. Its pathway is amino-acid biosynthesis; L-leucine biosynthesis; L-leucine from 3-methyl-2-oxobutanoate: step 2/4. In terms of biological role, catalyzes the isomerization between 2-isopropylmalate and 3-isopropylmalate, via the formation of 2-isopropylmaleate. This chain is 3-isopropylmalate dehydratase large subunit, found in Listeria monocytogenes serotype 4b (strain CLIP80459).